Consider the following 211-residue polypeptide: Hypoxanthine-guanine phosphoribosyltransferase (211 aa).

The tract at residues 1-20 is disordered; that stretch reads MSNSAKSPSGPVGDEGRRNY. Residues Lys-66, 125–133, Lys-157, and Asp-185 contribute to the GMP site; that span reads EDIVDSAIT. The active-site Proton acceptor is Asp-129. Asp-185 contributes to the Mg(2+) binding site.

It belongs to the purine/pyrimidine phosphoribosyltransferase family. Mg(2+) is required as a cofactor.

The protein localises to the cytoplasm. The catalysed reaction is IMP + diphosphate = hypoxanthine + 5-phospho-alpha-D-ribose 1-diphosphate. The enzyme catalyses GMP + diphosphate = guanine + 5-phospho-alpha-D-ribose 1-diphosphate. Its pathway is purine metabolism; IMP biosynthesis via salvage pathway; IMP from hypoxanthine: step 1/1. Converts guanine to guanosine monophosphate, and hypoxanthine to inosine monophosphate. Transfers the 5-phosphoribosyl group from 5-phosphoribosylpyrophosphate onto the purine. Plays a central role in the generation of purine nucleotides through the purine salvage pathway. This is Hypoxanthine-guanine phosphoribosyltransferase from Leishmania donovani.